A 375-amino-acid polypeptide reads, in one-letter code: Chaperone protein DnaJ (375 aa).

The J domain occupies 5–70; sequence DYYEILGISK…EKRAAYDQYG (66 aa). Residues 130–208 form a CR-type zinc finger; sequence GIIKEICIPT…CHGNGRVERS (79 aa). The Zn(2+) site is built by Cys143, Cys146, Cys160, Cys163, Cys182, Cys185, Cys196, and Cys199. CXXCXGXG motif repeat units lie at residues 143 to 150, 160 to 167, 182 to 189, and 196 to 203; these read CEKCRGTG, CMTCHGQG, CPTCHGHG, and CNKCHGNG.

This sequence belongs to the DnaJ family. As to quaternary structure, homodimer. It depends on Zn(2+) as a cofactor.

It localises to the cytoplasm. In terms of biological role, participates actively in the response to hyperosmotic and heat shock by preventing the aggregation of stress-denatured proteins and by disaggregating proteins, also in an autonomous, DnaK-independent fashion. Unfolded proteins bind initially to DnaJ; upon interaction with the DnaJ-bound protein, DnaK hydrolyzes its bound ATP, resulting in the formation of a stable complex. GrpE releases ADP from DnaK; ATP binding to DnaK triggers the release of the substrate protein, thus completing the reaction cycle. Several rounds of ATP-dependent interactions between DnaJ, DnaK and GrpE are required for fully efficient folding. Also involved, together with DnaK and GrpE, in the DNA replication of plasmids through activation of initiation proteins. The sequence is that of Chaperone protein DnaJ from Blochmanniella pennsylvanica (strain BPEN).